We begin with the raw amino-acid sequence, 445 residues long: GTPase Der (445 aa).

2 consecutive EngA-type G domains span residues 3-167 (PVIA…YAGE) and 180-353 (IKIA…AAAM). GTP is bound by residues 9 to 16 (GRPNVGKS), 56 to 60 (DTGGF), 119 to 122 (NKAE), 186 to 193 (GRPNVGKS), 233 to 237 (DTAGL), and 298 to 301 (NKWD). In terms of domain architecture, KH-like spans 354-438 (KKLPTPKLTR…PLRIEFRSST (85 aa)).

This sequence belongs to the TRAFAC class TrmE-Era-EngA-EngB-Septin-like GTPase superfamily. EngA (Der) GTPase family. As to quaternary structure, associates with the 50S ribosomal subunit.

In terms of biological role, GTPase that plays an essential role in the late steps of ribosome biogenesis. The protein is GTPase Der of Burkholderia pseudomallei (strain 1106a).